The following is a 63-amino-acid chain: Large ribosomal subunit protein uL30 (63 aa).

It belongs to the universal ribosomal protein uL30 family. Part of the 50S ribosomal subunit.

This Rickettsia felis (strain ATCC VR-1525 / URRWXCal2) (Rickettsia azadi) protein is Large ribosomal subunit protein uL30.